A 97-amino-acid polypeptide reads, in one-letter code: Serine protease inhibitor Kazal-type 13 (97 aa).

Positions 1–26 are cleaved as a signal peptide; sequence MKRSGCWHQRMLLSLVLLTWTHVTFS. A glycan (N-linked (GlcNAc...) asparagine) is linked at N33. Residues 36–97 enclose the Kazal-like domain; that stretch reads RWPKPPCKMY…IQFVKYGKCE (62 aa). Cystine bridges form between C42-C78, C56-C75, and C64-C96.

It localises to the secreted. Functionally, may be a serine protease inhibitor. Essential for sperm maturation and fertility. Inhibits sperm acrosome reaction, protecting sperm from premature reaction. This is Serine protease inhibitor Kazal-type 13 (Spink13) from Mus musculus (Mouse).